Here is a 486-residue protein sequence, read N- to C-terminus: MLNASLRQLSLLLSEKKISSTELTSEFLSRIKALNPDLNAFITIDEEKSLDQANVADKMIAAGRSTPLTGIPIAQKDIFCARGWLTTCGSKMLSNFVSPYDATVVERFDQAGMVNLGKTNMDEFAMGSSNETSYYGPVKNPWDRLAVPGGSSGGSACAVAARLAPAATGSDTGGSIRQPAALCGISGIKPTYGLVSRYGMIAFASSLDQGGPMAKSAEDLALLLNTMVGFDERDSTSLQRAEENYTQDLEKPVNGLRIGLPKEFFAEGMSSDVSNVIEAALAEYRKLGATFVEVSLPNSKLAVPVYYVLAPAEASSNLSRFDGVRYGYRTAQYSSLEDLYTKTRAEGFGEEVKRRILIGTYVLSHGYYDAYYLQAQKLRRLIAEDFRKAFEQCDLIMGPTTPTVAFNIGEKCDDPIQMYLSDIYTSTASLAGLPGMSIPAGFGSKNRPVGLHIIGNYFREAQMLNVAHRYQQVTNWHELTPPETSN.

Catalysis depends on charge relay system residues K76 and S151. Catalysis depends on S175, which acts as the Acyl-ester intermediate.

This sequence belongs to the amidase family. GatA subfamily. In terms of assembly, heterotrimer of A, B and C subunits.

It catalyses the reaction L-glutamyl-tRNA(Gln) + L-glutamine + ATP + H2O = L-glutaminyl-tRNA(Gln) + L-glutamate + ADP + phosphate + H(+). Allows the formation of correctly charged Gln-tRNA(Gln) through the transamidation of misacylated Glu-tRNA(Gln) in organisms which lack glutaminyl-tRNA synthetase. The reaction takes place in the presence of glutamine and ATP through an activated gamma-phospho-Glu-tRNA(Gln). The chain is Glutamyl-tRNA(Gln) amidotransferase subunit A from Nitrosomonas europaea (strain ATCC 19718 / CIP 103999 / KCTC 2705 / NBRC 14298).